The following is a 111-amino-acid chain: Phosphoribosyl-ATP pyrophosphatase (111 aa).

It belongs to the PRA-PH family.

It localises to the cytoplasm. It catalyses the reaction 1-(5-phospho-beta-D-ribosyl)-ATP + H2O = 1-(5-phospho-beta-D-ribosyl)-5'-AMP + diphosphate + H(+). It participates in amino-acid biosynthesis; L-histidine biosynthesis; L-histidine from 5-phospho-alpha-D-ribose 1-diphosphate: step 2/9. The polypeptide is Phosphoribosyl-ATP pyrophosphatase (Ectopseudomonas mendocina (strain ymp) (Pseudomonas mendocina)).